We begin with the raw amino-acid sequence, 86 residues long: Acyl carrier protein (86 aa).

Residues 7–85 enclose the Carrier domain; the sequence is SKVDNIEQKV…DVVNYIKEHK (79 aa). At Ser-45 the chain carries O-(pantetheine 4'-phosphoryl)serine.

It belongs to the acyl carrier protein (ACP) family. 4'-phosphopantetheine is transferred from CoA to a specific serine of apo-ACP by AcpS. This modification is essential for activity because fatty acids are bound in thioester linkage to the sulfhydryl of the prosthetic group.

The protein resides in the cytoplasm. The protein operates within lipid metabolism; fatty acid biosynthesis. Carrier of the growing fatty acid chain in fatty acid biosynthesis. The polypeptide is Acyl carrier protein (Rickettsia bellii (strain RML369-C)).